Reading from the N-terminus, the 446-residue chain is Tetratricopeptide repeat protein 23 (446 aa).

4 TPR repeats span residues 45 to 78 (LHLC…TKIC), 137 to 170 (LELF…SKEM), 186 to 219 (SRIK…TETT), and 356 to 389 (AETY…ETFL).

Associated with the EvC complex composed of EFCAB7, IQCE, EVC2 and EVC.

It is found in the cell projection. It localises to the cilium. Its function is as follows. Participates positively in the ciliary Hedgehog (Hh) signaling. The protein is Tetratricopeptide repeat protein 23 (Ttc23) of Rattus norvegicus (Rat).